A 683-amino-acid polypeptide reads, in one-letter code: E3 ubiquitin-protein ligase WAVH1 (683 aa).

Residues 130–176 (CGICLQSVKSGQGTAIFTAECSHTFHFPCVTSRAAANHNRLASCPVC) form an RING-type; atypical zinc finger. Residues 302–438 (DLVAVLDVSG…AHSRIPIHTI (137 aa)) enclose the VWFA domain.

Expressed in root tips and leaf primordia.

The enzyme catalyses S-ubiquitinyl-[E2 ubiquitin-conjugating enzyme]-L-cysteine + [acceptor protein]-L-lysine = [E2 ubiquitin-conjugating enzyme]-L-cysteine + N(6)-ubiquitinyl-[acceptor protein]-L-lysine.. Its function is as follows. E3 ubiquitin-protein ligase involved in the regulation of root growth. Acts as a positive regulator of root gravitropism. Possesses E3 protein ligase activity in vitro. In Arabidopsis thaliana (Mouse-ear cress), this protein is E3 ubiquitin-protein ligase WAVH1.